Here is a 111-residue protein sequence, read N- to C-terminus: Guanylate cyclase activator 2B (111 aa).

Residues methionine 1–serine 26 form the signal peptide. A propeptide spanning residues valine 27 to aspartate 96 is cleaved from the precursor. 3 cysteine pairs are disulfide-bonded: cysteine 67-cysteine 80, cysteine 100-cysteine 108, and cysteine 103-cysteine 111.

This sequence belongs to the guanylin family.

Its subcellular location is the secreted. In terms of biological role, endogenous activator of intestinal guanylate cyclase. It stimulates this enzyme through the same receptor binding region as the heat-stable enterotoxins. May be a potent physiological regulator of intestinal fluid and electrolyte transport. May be an autocrine/paracrine regulator of intestinal salt and water transport. The protein is Guanylate cyclase activator 2B (GUCA2B) of Cavia porcellus (Guinea pig).